Consider the following 301-residue polypeptide: MNVPLTHLQRLEAESIHIFREVAAAFTKPVMLYSVGKDSSVLMHLAMKAFYPAKPPFPFLHVDTTWKFREMIAFRDQMAQKRGFDLLVHFNEDGVRDNINPFDHGSNTHTHVMKTVALRQALDKYGFDAAFGGARRDEEKSRAKERIFSFRNAQHVWDPKNQRPEMWKIFNTRIASGESIRVFPLSNWTELDIWQYILQENIPIVPLYFAKQRPVVERDGMLILRDDERMKLRPGETVENRLVRFRTLGCYPLTGAIESDADTLEAIVGEMLTARTSERQGRLIDRDEAGSMEKKKREGYF.

The disordered stretch occupies residues 279–301; the sequence is RQGRLIDRDEAGSMEKKKREGYF.

It belongs to the PAPS reductase family. CysD subfamily. Sulfate-activating enzymes, NodP and NodQ, may be physically associated.

The enzyme catalyses sulfate + ATP + H(+) = adenosine 5'-phosphosulfate + diphosphate. Functionally, proposed to provide activated sulfate for transfer to nod factor. This is Sulfate adenylyltransferase subunit 2 (nodP) from Rhizobium sp. (strain N33).